The chain runs to 1134 residues: Vinculin (1134 aa).

The N-terminal globular head stretch occupies residues 1-835 (MPVFHTRTIE…GAVAKVREAF (835 aa)). Position 97 is a phosphoserine (serine 97). The interval 168–208 (MTKMAKMIDERQQELTHQEHRVMLVNSMNTVKELLPVLISA) is talin-interaction. The residue at position 173 (lysine 173) is an N6-acetyllysine. Repeat copies occupy residues 259–369 (ASKD…KVEN), 370–479 (AARK…KTNR), and 480–589 (AVAN…RMQE). A 3 X 112 AA tandem repeats region spans residues 259 to 589 (ASKDTEAMKR…LKDLKARMQE (331 aa)). A phosphoserine mark is found at serine 260, serine 272, serine 275, serine 288, serine 290, serine 346, and serine 434. Lysine 496 carries the N6-acetyllysine modification. The residue at position 537 (tyrosine 537) is a Phosphotyrosine. Phosphoserine is present on residues serine 574, serine 579, and serine 600. A phosphothreonine mark is found at threonine 604 and threonine 672. Serine 721 bears the Phosphoserine mark. The tract at residues 741 to 764 (MANIQPQMLVAGATSIARRANRIL) is interaction with ACTN4. Phosphoserine is present on residues serine 795 and serine 809. Tyrosine 822 bears the Phosphotyrosine mark. Residues 836 to 878 (QPQEPDFPPPPPDLEQLRLTDELAPPKPPLPEGEVPPPRPPPP) form a linker (Pro-rich) region. Residues 857-887 (ELAPPKPPLPEGEVPPPRPPPPEEKDEEFPE) form a disordered region. Over residues 860-876 (PPKPPLPEGEVPPPRPP) the composition is skewed to pro residues. Residues 879–1134 (EEKDEEFPEQ…RWVRKTPWYQ (256 aa)) form a C-terminal tail region. Facilitates phospholipid membrane insertion stretches follow at residues 1003-1046 (RLVR…KRIR) and 1120-1134 (AGFTLRWVRKTPWYQ). At tyrosine 1133 the chain carries Phosphotyrosine; by SRC-type Tyr-kinases.

Belongs to the vinculin/alpha-catenin family. In terms of assembly, exhibits self-association properties. Part of a complex composed of THSD1, PTK2/FAK1, TLN1 and VCL. Interacts with APBB1IP and NRAP. Interacts with TLN1. Interacts with CTNNB1 and this interaction is necessary for its localization to the cell-cell junctions and for its function in regulating cell surface expression of E-cadherin. Interacts with SYNM. Interacts with SORBS1. Interacts with CTNNA1. Binds to ACTN4; this interaction triggers conformational changes. Interacts with FLII. As to quaternary structure, (Microbial infection) Interacts via its globular head domain with the central portion of S.flexneri IcsA (also called VirG). Post-translationally, phosphorylated; on serines, threonines and tyrosines. Phosphorylation on Tyr-1133 in activated platelets affects head-tail interactions and cell spreading but has no effect on actin binding nor on localization to focal adhesion plaques. In terms of processing, acetylated; mainly by myristic acid but also by a small amount of palmitic acid. Metavinculin is muscle-specific.

The protein resides in the cell membrane. It localises to the cell junction. The protein localises to the adherens junction. It is found in the focal adhesion. Its subcellular location is the cytoplasm. The protein resides in the cytoskeleton. It localises to the sarcolemma. The protein localises to the cell projection. It is found in the podosome. Functionally, actin filament (F-actin)-binding protein involved in cell-matrix adhesion and cell-cell adhesion. Regulates cell-surface E-cadherin expression and potentiates mechanosensing by the E-cadherin complex. May also play important roles in cell morphology and locomotion. The chain is Vinculin (VCL) from Homo sapiens (Human).